Consider the following 358-residue polypeptide: 3-isopropylmalate dehydrogenase (358 aa).

Arg92, Arg102, Arg130, and Asp224 together coordinate substrate. The Mg(2+) site is built by Asp224, Asp248, and Asp252. 282–294 (GSAPDIAGQGIAN) provides a ligand contact to NAD(+).

The protein belongs to the isocitrate and isopropylmalate dehydrogenases family. LeuB type 1 subfamily. Homodimer. The cofactor is Mg(2+). Mn(2+) serves as cofactor.

The protein localises to the cytoplasm. The catalysed reaction is (2R,3S)-3-isopropylmalate + NAD(+) = 4-methyl-2-oxopentanoate + CO2 + NADH. The protein operates within amino-acid biosynthesis; L-leucine biosynthesis; L-leucine from 3-methyl-2-oxobutanoate: step 3/4. Its function is as follows. Catalyzes the oxidation of 3-carboxy-2-hydroxy-4-methylpentanoate (3-isopropylmalate) to 3-carboxy-4-methyl-2-oxopentanoate. The product decarboxylates to 4-methyl-2 oxopentanoate. The sequence is that of 3-isopropylmalate dehydrogenase from Bordetella avium (strain 197N).